A 483-amino-acid chain; its full sequence is BTB/POZ domain and ankyrin repeat-containing protein COCH (483 aa).

The BTB domain occupies 25–105 (SDVVFSVEGR…LYSGQVSIVP (81 aa)). The C2HC NPR-type zinc finger occupies 111-125 (RPNCGDRGCWHTHCT). The Zn(2+) site is built by cysteine 114, cysteine 119, histidine 121, and cysteine 124. 4 ANK repeats span residues 249–278 (QKIRRMRRALDSSDVELVKLMVMGEGLNLD), 279–308 (EALALPYAVESCSREVVKALLELGAADVNF), 313–342 (TGKTPLHIAAEMVSPDMVAVLLDHHADPNV), and 346–380 (DGVTPLDILRTLTSDFLFKGAVPGLTHIEPNKLRL). Disordered regions lie at residues 395-435 (EEGN…NSNM) and 450-483 (MSTSRLDSGDDDHNSNQREAMNPSMYHHHHSHDY). The segment covering 398-414 (NNNNNANNNNTGSSATN) has biased composition (low complexity). The span at 456–465 (DSGDDDHNSN) shows a compositional bias: basic and acidic residues.

This sequence belongs to the plant 'ANKYRIN-BTB/POZ' family. 'NOOT-BOP-COCH-like' (NBCL) subfamily. Homodimer.

It is found in the nucleus. The protein localises to the cytoplasm. It localises to the cell membrane. It functions in the pathway protein modification; protein ubiquitination. Functionally, may act as a substrate-specific adapter of an E3 ubiquitin-protein ligase complex (CUL3-RBX1-BTB) which mediates the ubiquitination and subsequent proteasomal degradation of target proteins. Transcriptional co-regulator involved in the promotion of leaf and floral meristem fate and determinacy. Promotes normal stipule growth and development. Required for the abscission of senescent organs, probably by regulating the cell wall disorganization in abscission zones (AZs, e.g. pulvini at the base of leaves). Down-regulates UNI expression in primordia of leaves and secondary inflorescences, and thereby controls their sizes and/or structures. Involved in the coordination of the symbiotic nodule developmental program. Promotes the formation of root nodules by interacting directly with APP1 to modulate the expression of the nuclear transcription factor Y subunit (NF-YA1), a key nodulin. Necessary for the robust maintenance of nodule identity throughout the nodule developmental program. The polypeptide is BTB/POZ domain and ankyrin repeat-containing protein COCH (Pisum sativum (Garden pea)).